A 306-amino-acid chain; its full sequence is Ornithine carbamoyltransferase (306 aa).

Residues 54–57 (STRT), Gln-81, Arg-105, and 132–135 (HPLQ) each bind carbamoyl phosphate. L-ornithine-binding positions include Asn-162, Asp-226, and 230–231 (SM). Carbamoyl phosphate-binding positions include 266 to 267 (CL) and Arg-294.

The protein belongs to the aspartate/ornithine carbamoyltransferase superfamily. OTCase family.

The protein resides in the cytoplasm. The catalysed reaction is carbamoyl phosphate + L-ornithine = L-citrulline + phosphate + H(+). It participates in amino-acid biosynthesis; L-arginine biosynthesis; L-arginine from L-ornithine and carbamoyl phosphate: step 1/3. Its function is as follows. Reversibly catalyzes the transfer of the carbamoyl group from carbamoyl phosphate (CP) to the N(epsilon) atom of ornithine (ORN) to produce L-citrulline. The chain is Ornithine carbamoyltransferase from Sulfolobus acidocaldarius (strain ATCC 33909 / DSM 639 / JCM 8929 / NBRC 15157 / NCIMB 11770).